Here is a 479-residue protein sequence, read N- to C-terminus: NADH-quinone oxidoreductase subunit N (479 aa).

The next 14 membrane-spanning stretches (helical) occupy residues 3–23 (MLYG…FQLI), 40–60 (IGFA…FNGI), 77–97 (IIIL…IKVA), 102–122 (HSEY…LVSA), 125–145 (FMVM…LTTF), 159–179 (YFIL…LVYG), 200–220 (MAVL…KLSI), 234–254 (APLV…LALL), 268–288 (FFYI…VGAF), 299–319 (FIAY…VANS), 327–347 (ISYF…AIII), 373–393 (SILI…AGFI), 409–429 (ELII…LNIV), and 452–472 (LVSI…MLFG).

Belongs to the complex I subunit 2 family. As to quaternary structure, NDH-1 is composed of 14 different subunits. Subunits NuoA, H, J, K, L, M, N constitute the membrane sector of the complex.

The protein localises to the cell inner membrane. It carries out the reaction a quinone + NADH + 5 H(+)(in) = a quinol + NAD(+) + 4 H(+)(out). Functionally, NDH-1 shuttles electrons from NADH, via FMN and iron-sulfur (Fe-S) centers, to quinones in the respiratory chain. The immediate electron acceptor for the enzyme in this species is believed to be ubiquinone. Couples the redox reaction to proton translocation (for every two electrons transferred, four hydrogen ions are translocated across the cytoplasmic membrane), and thus conserves the redox energy in a proton gradient. The protein is NADH-quinone oxidoreductase subunit N of Orientia tsutsugamushi (strain Ikeda) (Rickettsia tsutsugamushi).